The primary structure comprises 341 residues: Dye-decolorizing peroxidase (341 aa).

Asp-148 (proton acceptor) is an active-site residue. His-221 is a heme binding site. The targeting peptide stretch occupies residues 304-341 (FLDDPPDAPTRLVPEATFTAPISDGSLGIGSLKRSAQQ).

This sequence belongs to the DyP-type peroxidase family. In terms of assembly, homohexamer. Heme b serves as cofactor.

It localises to the encapsulin nanocompartment. Functionally, cargo protein of a type 1 encapsulin nanocompartment. Has both general peroxidase activity and dye-decolorizing activity. Can catalyze the oxidation of both protoporphyrinogen IX and coproporphyrinogen III to their corresponding porphyrins. Also efficiently decolorizes the dyes alizarin red and Cibacron blue F3GA. This cargo-loaded encapsulin nanocompartment is probably involved in protection against oxidative damage. The chain is Dye-decolorizing peroxidase from Rhodococcus erythropolis (strain PR4 / NBRC 100887).